Here is a 1134-residue protein sequence, read N- to C-terminus: Centrosomal protein of 131 kDa (1134 aa).

Disordered stretches follow at residues 111–131, 168–208, 286–306, 425–455, and 492–528; these read NSSE…EEGE, DLPG…PLTL, ESSK…APSS, VGKK…TINP, and DQKQ…EDSR. Positions 180–196 are enriched in basic and acidic residues; sequence MHADLDSSDCDNDKQEV. Residues 494-504 are compositionally biased toward basic and acidic residues; the sequence is KQYDGKHKPGL. Residues 513–522 are compositionally biased toward polar residues; the sequence is NDTASQLSLK. Residues 732 to 1131 are a coiled coil; sequence LESQNQAWEH…AVIRQQRKDY (400 aa).

Belongs to the CEP131 family. As to expression, expressed in chordotonal (Ch) neuronal precursors. Expressed in ciliated cells, like sensory neurons and spermatids.

Its subcellular location is the cytoplasm. The protein localises to the cytoskeleton. It localises to the microtubule organizing center. It is found in the centrosome. The protein resides in the cilium basal body. Its subcellular location is the centriole. In terms of biological role, cilium-specific protein with a role in cilium/flagellum formation. May be involved in transport of components into the growing cilium. In germ cells and sensory neurons, plays a role with Cby in the building of the transition zone necessary for the formation of the ciliary cap and for the correct elongation of the axoneme. This Drosophila melanogaster (Fruit fly) protein is Centrosomal protein of 131 kDa.